The primary structure comprises 494 residues: MAATAECDVVMAATEPELLEDEDAKREAESFKEQGNAYYAKKDYNEAYNYYTKAIDMCPNNASYYGNRAATLMMLGRFREALGDAQQSVRLDDSFVRGHLREGKCHLSLGNAMAACRSFQRALELDHKNAQAQQEFKNANAVMEYEKIAEVDFEKRDFRKVVFCMDRALEFAPACHRFKILKAECLAMLGRYPEAQFVASDILRMDSTNADALYVRGLCLYYEDCIEKAVQFFVQALRMAPDHEKACVACRNAKALKAKKEDGNKAFKEGNYKLAYELYTEALGIDPNNIKTNAKLYCNRGTVNSKLRQLEDAIEDCTNAVKLDDTYIKAYLRRAQCYMDTEQFEEAVRDYEKVYQTEKTKEHKQLLKNAQLELKKSKRKDYYKILGVDKNASEDEIKKAYRKRALMHHPDRHSGASAEVQKEEEKKFKEVGEAFTILSDPKKKTRYDSGQDLDEEGMNMGDFDANNIFKAFFGGPGGFSFEASGPGNFYFQFG.

Position 2 is an N-acetylalanine (Ala-2). TPR repeat units lie at residues 28–61, 62–95, 96–129, 142–175, 210–243, 256–289, 294–327, and 328–361; these read AESFKEQGNAYYAKKDYNEAYNYYTKAIDMCPNN, ASYYGNRAATLMMLGRFREALGDAQQSVRLDDSF, VRGHLREGKCHLSLGNAMAACRSFQRALELDHKN, VMEYEKIAEVDFEKRDFRKVVFCMDRALEFAPAC, ADALYVRGLCLYYEDCIEKAVQFFVQALRMAPDH, LKAKKEDGNKAFKEGNYKLAYELYTEALGIDPNN, AKLYCNRGTVNSKLRQLEDAIEDCTNAVKLDDTY, and IKAYLRRAQCYMDTEQFEEAVRDYEKVYQTEKTK. One can recognise a J domain in the interval 381-451; the sequence is DYYKILGVDK…KKKTRYDSGQ (71 aa). Ser-393 is subject to Phosphoserine.

As to quaternary structure, associates with complexes containing chaperones HSP70 and HSP90. Interacts with the GAP domain of NF1. Interacts with HSP90AA1. Interacts with HSPA1A/B; the interaction is enhanced by ATP. Interacts with HSP90AB1. Interacts with PGR. Interacts with RAD9A; the interaction is interrupted by UV and heat shock treatments. Interacts with HUS1 and RAD1. Interacts with NR1I3; this complex may also include HSP90 Interacts with HSPA8. Widely expressed with high levels in liver, skeletal muscle, kidney and testis.

The protein localises to the cytoplasm. Its subcellular location is the nucleus. It is found in the cytoskeleton. Functionally, acts as a co-chaperone regulating the molecular chaperones HSP70 and HSP90 in folding of steroid receptors, such as the glucocorticoid receptor and the progesterone receptor. Proposed to act as a recycling chaperone by facilitating the return of chaperone substrates to early stages of chaperoning if further folding is required. In vitro, induces ATP-independent dissociation of HSP90 but not of HSP70 from the chaperone-substrate complexes. Recruits NR1I3 to the cytoplasm. The chain is DnaJ homolog subfamily C member 7 (Dnajc7) from Mus musculus (Mouse).